A 261-amino-acid polypeptide reads, in one-letter code: tRNA U34 carboxymethyltransferase (261 aa).

Carboxy-S-adenosyl-L-methionine-binding positions include K25, W39, K44, G63, 114-115 (VE), Y135, and R250.

The protein belongs to the class I-like SAM-binding methyltransferase superfamily. CmoB family. As to quaternary structure, homotetramer.

It carries out the reaction carboxy-S-adenosyl-L-methionine + 5-hydroxyuridine(34) in tRNA = 5-carboxymethoxyuridine(34) in tRNA + S-adenosyl-L-homocysteine + H(+). In terms of biological role, catalyzes carboxymethyl transfer from carboxy-S-adenosyl-L-methionine (Cx-SAM) to 5-hydroxyuridine (ho5U) to form 5-carboxymethoxyuridine (cmo5U) at position 34 in tRNAs. This chain is tRNA U34 carboxymethyltransferase, found in Helicobacter pylori (strain J99 / ATCC 700824) (Campylobacter pylori J99).